The following is a 371-amino-acid chain: Histidinol-phosphate aminotransferase (371 aa).

The residue at position 232 (Lys232) is an N6-(pyridoxal phosphate)lysine.

This sequence belongs to the class-II pyridoxal-phosphate-dependent aminotransferase family. Histidinol-phosphate aminotransferase subfamily. Homodimer. Requires pyridoxal 5'-phosphate as cofactor.

The enzyme catalyses L-histidinol phosphate + 2-oxoglutarate = 3-(imidazol-4-yl)-2-oxopropyl phosphate + L-glutamate. Its pathway is amino-acid biosynthesis; L-histidine biosynthesis; L-histidine from 5-phospho-alpha-D-ribose 1-diphosphate: step 7/9. This is Histidinol-phosphate aminotransferase from Methylibium petroleiphilum (strain ATCC BAA-1232 / LMG 22953 / PM1).